The chain runs to 631 residues: DNA mismatch repair protein MutL (631 aa).

This sequence belongs to the DNA mismatch repair MutL/HexB family.

In terms of biological role, this protein is involved in the repair of mismatches in DNA. It is required for dam-dependent methyl-directed DNA mismatch repair. May act as a 'molecular matchmaker', a protein that promotes the formation of a stable complex between two or more DNA-binding proteins in an ATP-dependent manner without itself being part of a final effector complex. The protein is DNA mismatch repair protein MutL of Lactobacillus acidophilus (strain ATCC 700396 / NCK56 / N2 / NCFM).